We begin with the raw amino-acid sequence, 368 residues long: Nicotinamide/nicotinic acid mononucleotide adenylyltransferase (368 aa).

Positions 1-14 (MHTMNGDNFANSFP) are enriched in polar residues. The tract at residues 1-25 (MHTMNGDNFANSFPKNPLLSRNSSS) is disordered. Phosphoserine is present on Ser-36. The tract at residues 47–78 (AKEHEERIRRPSVNRAWQKNSTSGGPSVSLEK) is disordered. Polar residues predominate over residues 61–72 (RAWQKNSTSGGP). Residues Ser-75 and Ser-85 each carry the phosphoserine modification. The NAD(+) site is built by Ser-135 and Phe-136. His-143 provides a ligand contact to ATP. NAD(+) contacts are provided by Thr-215, Gly-250, Asp-252, Trp-263, Arg-282, and Asn-313. Residue 318-321 (TKVR) participates in ATP binding.

This sequence belongs to the eukaryotic NMN adenylyltransferase family. The cofactor is a divalent metal cation.

It localises to the cytoplasm. The protein localises to the nucleus. It carries out the reaction beta-nicotinamide D-ribonucleotide + ATP + H(+) = diphosphate + NAD(+). The enzyme catalyses nicotinate beta-D-ribonucleotide + ATP + H(+) = deamido-NAD(+) + diphosphate. Its pathway is cofactor biosynthesis; NAD(+) biosynthesis; deamido-NAD(+) from nicotinate D-ribonucleotide: step 1/1. It functions in the pathway cofactor biosynthesis; NAD(+) biosynthesis; NAD(+) from nicotinamide D-ribonucleotide: step 1/1. Functionally, catalyzes the formation of NAD(+) from nicotinamide mononucleotide (NMN) and ATP. Can also use the deamidated form; nicotinic acid mononucleotide (NaMN) as substrate to form deamido-NAD(+) (NaAD). Key enzyme in both de novo and salvage pathways for NAD(+) biosynthesis. The protein is Nicotinamide/nicotinic acid mononucleotide adenylyltransferase of Schizosaccharomyces pombe (strain 972 / ATCC 24843) (Fission yeast).